The following is a 577-amino-acid chain: Sulfite reductase [NADPH] hemoprotein beta-component (577 aa).

Residues cysteine 440, cysteine 446, cysteine 486, and cysteine 490 each coordinate [4Fe-4S] cluster. Cysteine 490 serves as a coordination point for siroheme.

Belongs to the nitrite and sulfite reductase 4Fe-4S domain family. As to quaternary structure, alpha(8)-beta(8). The alpha component is a flavoprotein, the beta component is a hemoprotein. Siroheme serves as cofactor. [4Fe-4S] cluster is required as a cofactor.

The catalysed reaction is hydrogen sulfide + 3 NADP(+) + 3 H2O = sulfite + 3 NADPH + 4 H(+). The protein operates within sulfur metabolism; hydrogen sulfide biosynthesis; hydrogen sulfide from sulfite (NADPH route): step 1/1. In terms of biological role, component of the sulfite reductase complex that catalyzes the 6-electron reduction of sulfite to sulfide. This is one of several activities required for the biosynthesis of L-cysteine from sulfate. This chain is Sulfite reductase [NADPH] hemoprotein beta-component, found in Vibrio cholerae serotype O1 (strain ATCC 39315 / El Tor Inaba N16961).